Consider the following 110-residue polypeptide: MGASGSKARGLWPFASAAGGGGSEAAGAEQALVRPRGRAVPPFVFTRRGSMFYDEDGDLAHEFYEETIVTKNGQKRAKLRRVHKNLIPQGIVKLDHPRIHVDFPVILYEV.

A lipid anchor (N-myristoyl glycine) is attached at Gly2. Position 50 is a phosphoserine (Ser50).

This sequence belongs to the TUSC2 family. In terms of processing, myristoylation is required for tumor suppressor activity. In terms of tissue distribution, strong expression in heart, lung, skeletal muscle, kidney, and pancreas, followed by brain and liver, lowest levels in placenta.

In terms of biological role, may function as a tumor suppressor, inhibiting colony formation, causing G1 arrest and ultimately inducing apoptosis in homozygous 3p21.3 120-kb region-deficient cells. In Homo sapiens (Human), this protein is Tumor suppressor candidate 2 (TUSC2).